The primary structure comprises 124 residues: Mitochondrial zinc maintenance protein 1, mitochondrial (124 aa).

This sequence belongs to the complex I LYR family. MZM1 subfamily. Interacts with RIP1.

Its subcellular location is the mitochondrion matrix. Assembly factor required for Rieske Fe-S protein RIP1 incorporation into the cytochrome b-c1 (CIII) complex. Functions as a chaperone, binding to this subunit within the mitochondrial matrix and stabilizing it prior to its translocation and insertion into the late CIII dimeric intermediate within the mitochondrial inner membrane. Modulates the mitochondrial matrix zinc pool. The sequence is that of Mitochondrial zinc maintenance protein 1, mitochondrial (MZM1) from Paracoccidioides lutzii (strain ATCC MYA-826 / Pb01) (Paracoccidioides brasiliensis).